The following is a 307-amino-acid chain: D-alanine--D-alanine ligase (307 aa).

An ATP-grasp domain is found at 105–304 (KMLWKGFGLP…FEKLVEKILE (200 aa)). 135-190 (VARLGLPLMVKPSREGSSVGLTKVDSADKLKSAVDLALKFDDIVLIEEWLSGDELT) contacts ATP. Mg(2+) is bound by residues Asp258, Glu271, and Asn273.

The protein belongs to the D-alanine--D-alanine ligase family. Mg(2+) is required as a cofactor. Requires Mn(2+) as cofactor.

It is found in the cytoplasm. It catalyses the reaction 2 D-alanine + ATP = D-alanyl-D-alanine + ADP + phosphate + H(+). It participates in cell wall biogenesis; peptidoglycan biosynthesis. Functionally, cell wall formation. In Actinobacillus succinogenes (strain ATCC 55618 / DSM 22257 / CCUG 43843 / 130Z), this protein is D-alanine--D-alanine ligase.